Consider the following 180-residue polypeptide: tRNA (cytidine(56)-2'-O)-methyltransferase (180 aa).

Position 85 (Leu85) interacts with S-adenosyl-L-methionine.

Belongs to the aTrm56 family. In terms of assembly, homodimer.

Its subcellular location is the cytoplasm. It carries out the reaction cytidine(56) in tRNA + S-adenosyl-L-methionine = 2'-O-methylcytidine(56) in tRNA + S-adenosyl-L-homocysteine + H(+). In terms of biological role, specifically catalyzes the AdoMet-dependent 2'-O-ribose methylation of cytidine at position 56 in tRNAs. In Methanobrevibacter smithii (strain ATCC 35061 / DSM 861 / OCM 144 / PS), this protein is tRNA (cytidine(56)-2'-O)-methyltransferase.